The sequence spans 256 residues: Undecaprenyl-diphosphatase (256 aa).

8 helical membrane-spanning segments follow: residues 1–21 (MTIL…FLPI), 39–59 (NAIN…AVIF), 70–90 (IDLW…GFIF), 97–117 (LFSL…FLIV), 134–154 (AISL…LIPG), 176–196 (AEFS…YDLL), 205–225 (ANLI…YLSI), and 235–255 (FTFF…LLFF).

It belongs to the UppP family.

It localises to the cell inner membrane. It catalyses the reaction di-trans,octa-cis-undecaprenyl diphosphate + H2O = di-trans,octa-cis-undecaprenyl phosphate + phosphate + H(+). In terms of biological role, catalyzes the dephosphorylation of undecaprenyl diphosphate (UPP). Confers resistance to bacitracin. The chain is Undecaprenyl-diphosphatase from Sulfurimonas denitrificans (strain ATCC 33889 / DSM 1251) (Thiomicrospira denitrificans (strain ATCC 33889 / DSM 1251)).